A 285-amino-acid polypeptide reads, in one-letter code: Probable nudix hydrolase C6G9.05 (285 aa).

A Nudix hydrolase domain is found at 114-254 (TRFASVLMPL…DLLYVEFNID (141 aa)). Positions 153–175 (GRVEPSDGSHYYAALRETYEEIG) match the Nudix box motif. Glutamate 169 and glutamate 173 together coordinate Mg(2+).

Belongs to the Nudix hydrolase family. PCD1 subfamily. Mn(2+) is required as a cofactor. Mg(2+) serves as cofactor.

Functionally, probably mediates the hydrolysis of some nucleoside diphosphate derivatives. The chain is Probable nudix hydrolase C6G9.05 from Schizosaccharomyces pombe (strain 972 / ATCC 24843) (Fission yeast).